Reading from the N-terminus, the 787-residue chain is DNA ligase (787 aa).

NAD(+) is bound by residues Asp32 to Asp36, Ser81 to Leu82, and Glu121. Catalysis depends on Lys123, which acts as the N6-AMP-lysine intermediate. Arg144, Glu181, Lys297, and Lys321 together coordinate NAD(+). Residues Cys415, Cys418, Cys445, and Cys451 each contribute to the Zn(2+) site. The 85-residue stretch at Val703–Asp787 folds into the BRCT domain.

The protein belongs to the NAD-dependent DNA ligase family. LigA subfamily. It depends on Mg(2+) as a cofactor. Requires Mn(2+) as cofactor.

It carries out the reaction NAD(+) + (deoxyribonucleotide)n-3'-hydroxyl + 5'-phospho-(deoxyribonucleotide)m = (deoxyribonucleotide)n+m + AMP + beta-nicotinamide D-nucleotide.. Functionally, DNA ligase that catalyzes the formation of phosphodiester linkages between 5'-phosphoryl and 3'-hydroxyl groups in double-stranded DNA using NAD as a coenzyme and as the energy source for the reaction. It is essential for DNA replication and repair of damaged DNA. This chain is DNA ligase, found in Pseudomonas savastanoi pv. phaseolicola (strain 1448A / Race 6) (Pseudomonas syringae pv. phaseolicola (strain 1448A / Race 6)).